Here is a 42-residue protein sequence, read N- to C-terminus: Capsid protein G8P (42 aa).

Over 1–12 (MGDILTGVSGAE) the chain is Periplasmic. Residues 13 to 34 (AATAMIAAAAIIALVGFTKWGA) traverse the membrane as a helical segment. Residues 35–42 (KKVASFFG) lie on the Cytoplasmic side of the membrane.

It belongs to the inovirus capsid protein family. As to quaternary structure, homomultimerizes. There are several thousands of this protein in the phage capsid.

It is found in the virion. Its subcellular location is the host membrane. Self assembles to form a helical capsid wrapping up the viral genomic DNA. The capsid displays a filamentous structure with a length of 760-1950 nm and a width of 6-8 nm. The virion assembly and budding take place at the host inner membrane. The sequence is that of Capsid protein G8P (VIII) from Xanthomonas phage phiLf (Bacteriophage phi-Lf).